Here is a 204-residue protein sequence, read N- to C-terminus: uncharacterized protein (204 aa).

Its function is as follows. Possibly involved in pGI2 replication mechanism. This is an uncharacterized protein from Bacillus thuringiensis.